The following is a 212-amino-acid chain: Uridine kinase (212 aa).

13-20 (GGSGSGKT) contributes to the ATP binding site.

The protein belongs to the uridine kinase family.

The protein resides in the cytoplasm. It catalyses the reaction uridine + ATP = UMP + ADP + H(+). It carries out the reaction cytidine + ATP = CMP + ADP + H(+). The protein operates within pyrimidine metabolism; CTP biosynthesis via salvage pathway; CTP from cytidine: step 1/3. It functions in the pathway pyrimidine metabolism; UMP biosynthesis via salvage pathway; UMP from uridine: step 1/1. This is Uridine kinase from Bacillus mycoides (strain KBAB4) (Bacillus weihenstephanensis).